Reading from the N-terminus, the 646-residue chain is Macrolide export ATP-binding/permease protein MacB (646 aa).

An ABC transporter domain is found at 7 to 245; it reads IRLEDICKTF…EATLQPHEEI (239 aa). 43-50 contacts ATP; that stretch reads GASGSGKS. The next 4 helical transmembrane spans lie at 274–294, 528–548, 572–592, and 609–629; these read VLTL…LAIG, VAAI…LVSV, FIIE…ILGL, and FGPV…FGFL.

This sequence belongs to the ABC transporter superfamily. Macrolide exporter (TC 3.A.1.122) family. In terms of assembly, homodimer.

It localises to the cell inner membrane. Non-canonical ABC transporter that contains transmembrane domains (TMD), which form a pore in the inner membrane, and an ATP-binding domain (NBD), which is responsible for energy generation. Confers resistance against macrolides. This Brucella abortus (strain 2308) protein is Macrolide export ATP-binding/permease protein MacB.